We begin with the raw amino-acid sequence, 70 residues long: Protein SlyX homolog (70 aa).

It belongs to the SlyX family.

This is Protein SlyX homolog from Shewanella loihica (strain ATCC BAA-1088 / PV-4).